Reading from the N-terminus, the 684-residue chain is PAN2-PAN3 deadenylation complex subunit PAN3 (684 aa).

Disordered regions lie at residues 1-38, 68-97, and 112-146; these read MLPPPKSAAVQIVRPPSPSSEKAKEKEKKHSPEKRETA, DPSTPQNSSPVAHAPTPSAPTPLAGTPARE, and VPKGLDSSPRASTPSVPTPSAPTPPVWPSLPSTGL. Residues 21–38 show a composition bias toward basic and acidic residues; the sequence is EKAKEKEKKHSPEKRETA. The C3H1-type zinc-finger motif lies at 36 to 65; it reads ETAQRICRNVMIYGYCKYQDQGCIYYHPPA. Pro residues predominate over residues 127 to 139; sequence VPTPSAPTPPVWP. The segment at 263–544 is pseudokinase domain; the sequence is GANGASAPGL…SIDEVVKMMG (282 aa). ATP-binding positions include Arg326 and 375–382; that span reads DYHPLSTT. The tract at residues 387-412 is disordered; sequence YLSPNPPEPSPASALANQPPKRRSSP. 444 to 445 serves as a coordination point for ATP; the sequence is SK. The stretch at 545 to 583 forms a coiled coil; it reads PRILNELDAVQSYADVLENELGAEVENGRIVRLLTKLGF. Residues 584 to 684 are knob domain; that stretch reads INERAEFELD…NAGNNHRVHR (101 aa).

It belongs to the protein kinase superfamily. PAN3 family. Homodimer. Forms a heterotrimer with a catalytic subunit PAN2 to form the poly(A)-nuclease (PAN) deadenylation complex. Interacts (via PAM-2 motif) with poly(A)-binding protein PAB1 (via PABC domain), conferring substrate specificity of the enzyme complex.

The protein resides in the cytoplasm. Regulatory subunit of the poly(A)-nuclease (PAN) deadenylation complex, one of two cytoplasmic mRNA deadenylases involved in mRNA turnover. PAN specifically shortens poly(A) tails of RNA and the activity is stimulated by poly(A)-binding protein PAB1. PAN deadenylation is followed by rapid degradation of the shortened mRNA tails by the CCR4-NOT complex. Deadenylated mRNAs are then degraded by two alternative mechanisms, namely exosome-mediated 3'-5' exonucleolytic degradation, or deadenylation-dependent mRNA decaping and subsequent 5'-3' exonucleolytic degradation by XRN1. May also be involved in post-transcriptional maturation of mRNA poly(A) tails. PAN3 acts as a positive regulator for PAN activity, recruiting the catalytic subunit PAN2 to mRNA via its interaction with RNA and with PAB1. This is PAN2-PAN3 deadenylation complex subunit PAN3 from Cryptococcus neoformans var. neoformans serotype D (strain B-3501A) (Filobasidiella neoformans).